The following is a 166-amino-acid chain: Large ribosomal subunit protein uL10 (166 aa).

It belongs to the universal ribosomal protein uL10 family. In terms of assembly, part of the ribosomal stalk of the 50S ribosomal subunit. The N-terminus interacts with L11 and the large rRNA to form the base of the stalk. The C-terminus forms an elongated spine to which L12 dimers bind in a sequential fashion forming a multimeric L10(L12)X complex.

Functionally, forms part of the ribosomal stalk, playing a central role in the interaction of the ribosome with GTP-bound translation factors. The protein is Large ribosomal subunit protein uL10 of Streptococcus pneumoniae serotype 19F (strain G54).